Consider the following 374-residue polypeptide: UDP-N-acetylglucosamine--N-acetylmuramyl-(pentapeptide) pyrophosphoryl-undecaprenol N-acetylglucosamine transferase (374 aa).

Residues 35-37 (TGG), N144, R185, S211, and Q305 contribute to the UDP-N-acetyl-alpha-D-glucosamine site.

Belongs to the glycosyltransferase 28 family. MurG subfamily.

It is found in the cell inner membrane. The catalysed reaction is di-trans,octa-cis-undecaprenyl diphospho-N-acetyl-alpha-D-muramoyl-L-alanyl-D-glutamyl-meso-2,6-diaminopimeloyl-D-alanyl-D-alanine + UDP-N-acetyl-alpha-D-glucosamine = di-trans,octa-cis-undecaprenyl diphospho-[N-acetyl-alpha-D-glucosaminyl-(1-&gt;4)]-N-acetyl-alpha-D-muramoyl-L-alanyl-D-glutamyl-meso-2,6-diaminopimeloyl-D-alanyl-D-alanine + UDP + H(+). It functions in the pathway cell wall biogenesis; peptidoglycan biosynthesis. Cell wall formation. Catalyzes the transfer of a GlcNAc subunit on undecaprenyl-pyrophosphoryl-MurNAc-pentapeptide (lipid intermediate I) to form undecaprenyl-pyrophosphoryl-MurNAc-(pentapeptide)GlcNAc (lipid intermediate II). The chain is UDP-N-acetylglucosamine--N-acetylmuramyl-(pentapeptide) pyrophosphoryl-undecaprenol N-acetylglucosamine transferase from Trichodesmium erythraeum (strain IMS101).